A 360-amino-acid polypeptide reads, in one-letter code: Mannonate dehydratase (360 aa).

It belongs to the mannonate dehydratase family. It depends on Fe(2+) as a cofactor. Requires Mn(2+) as cofactor.

It carries out the reaction D-mannonate = 2-dehydro-3-deoxy-D-gluconate + H2O. The protein operates within carbohydrate metabolism; pentose and glucuronate interconversion. Functionally, catalyzes the dehydration of D-mannonate. The chain is Mannonate dehydratase (uxuA) from Thermotoga neapolitana.